The following is a 338-amino-acid chain: NAD kinase (338 aa).

Residue Asp-66 is the Proton acceptor of the active site. NAD(+) is bound by residues 66-67 (DG), Arg-71, 141-142 (ND), Lys-152, Asp-171, 182-187 (TAYAFS), and Ala-206. The tract at residues 317 to 338 (GDAGVAGTEPDKPGERDGKAGA) is disordered. Residues 325-338 (EPDKPGERDGKAGA) are compositionally biased toward basic and acidic residues.

Belongs to the NAD kinase family. It depends on a divalent metal cation as a cofactor.

Its subcellular location is the cytoplasm. It catalyses the reaction NAD(+) + ATP = ADP + NADP(+) + H(+). In terms of biological role, involved in the regulation of the intracellular balance of NAD and NADP, and is a key enzyme in the biosynthesis of NADP. Catalyzes specifically the phosphorylation on 2'-hydroxyl of the adenosine moiety of NAD to yield NADP. This is NAD kinase from Bifidobacterium longum subsp. infantis (strain ATCC 15697 / DSM 20088 / JCM 1222 / NCTC 11817 / S12).